The chain runs to 602 residues: Elongation factor 4 (602 aa).

The region spanning 6 to 188 (KYIRNFCIIA…AIIRRVPPPR (183 aa)) is the tr-type G domain. GTP-binding positions include 18 to 23 (DHGKST) and 135 to 138 (NKID).

This sequence belongs to the TRAFAC class translation factor GTPase superfamily. Classic translation factor GTPase family. LepA subfamily.

It is found in the cell membrane. The catalysed reaction is GTP + H2O = GDP + phosphate + H(+). Functionally, required for accurate and efficient protein synthesis under certain stress conditions. May act as a fidelity factor of the translation reaction, by catalyzing a one-codon backward translocation of tRNAs on improperly translocated ribosomes. Back-translocation proceeds from a post-translocation (POST) complex to a pre-translocation (PRE) complex, thus giving elongation factor G a second chance to translocate the tRNAs correctly. Binds to ribosomes in a GTP-dependent manner. In Moorella thermoacetica (strain ATCC 39073 / JCM 9320), this protein is Elongation factor 4.